Here is a 352-residue protein sequence, read N- to C-terminus: Putative hetero-Diels-Alderase (352 aa).

The N-terminal stretch at 1-20 is a signal peptide; it reads MRYHLSALVLVFTAFRETLT. 6 N-linked (GlcNAc...) asparagine glycosylation sites follow: Asn26, Asn41, Asn47, Asn135, Asn211, and Asn310.

It belongs to the eupF Diels-Alderase family.

The protein operates within secondary metabolite biosynthesis; terpenoid biosynthesis. Putative hetero-Diels-Alderase; part of the gene cluster that mediates the biosynthesis of eupenifeldin, a bistropolone meroterpenoid that acts as an antitumor agent. The first step of eupenifeldin biosynthesis is the biosynthesis of 3-methylorcinaldehyde performed by the non-reducing polyketide synthase eupA. Oxidative dearomatization of 3-methylorcinaldehyde likely catalyzed by the FAD-dependent monooxygenase eupB is followed by oxidative ring expansion by the 2-oxoglutarate-dependent dioxygenase eupC to provide the first tropolone metabolite, tropolone stipitaldehyde. In parallel, generation of sesquiterpene alpha-humulene from farnesylpyrophosphate (FPP) is catalyzed by the terpene cyclase eupE. The cytochrome P450 monooxygenase eupD then hydroxylates humulene to humulenol. The putative Diels-Alderase eupF probably catalyzes the formation of the tropolone-humulene skeleton by linking humulenol and the polyketide moiety. The short-chain dehydrogenase/reductase eupG and the flavin-dependent monooxygenase eupH are also essential for eupenifeldin biosynthesis and are likely the additional decorating enzymes of the tropolone-humulene skeleton to produce final eupenifeldin or derivatives. This is Putative hetero-Diels-Alderase from Phoma sp.